The chain runs to 315 residues: WD repeat domain-containing protein 83 (315 aa).

WD repeat units follow at residues 23–62 (CGQG…LLRT), 65–104 (GHGY…VVRK), 107–146 (GHAG…PEPV), 151–188 (EARD…VTSD), 190–228 (VGSP…LLGE), 231–272 (GHKN…LALA), and 275–313 (VGSN…AEGG).

It belongs to the WD repeat MORG1 family. As to quaternary structure, interacts with EGLN3/PHD3. Interacts with ERK signaling proteins MAP2K1/MEK1, MAP2K2/MEK2, LAMTOR3, ARAF/Raf-1, MAPK1/ERK2 and MAPK3/ERK1. Identified in the spliceosome C complex. Interacts with PARD6B and CRB3. Interacts strongly with GTP-bound RRAGA but not with inactive GDP-bound. Interacts with p62/SQSTM1. As to expression, highly expressed in testis and brain. Expressed at intermediate level in heart, liver and kidney. Weakly expressed in spleen and lung and absent in muscle.

Its subcellular location is the cytoplasm. It localises to the lysosome. It is found in the nucleus. In terms of biological role, molecular scaffold protein for various multimeric protein complexes. Acts as a module in the assembly of a multicomponent scaffold for the ERK pathway, linking ERK responses to specific agonists. At low concentrations it enhances ERK activation, whereas high concentrations lead to the inhibition of ERK activation. Also involved in response to hypoxia by acting as a negative regulator of HIF1A/HIF-1-alpha via its interaction with EGLN3/PHD3. May promote degradation of HIF1A. May act by recruiting signaling complexes to a specific upstream activator. May also be involved in pre-mRNA splicing. Participates in tight junction development by regulating apico-basal polarity, a key step in tissue development and organization. Mechanistically, regulates the translocation of PAR6-aPKC from the cytoplasm to the apical surface by acting as an adapter between PARD6B AND CRB3. Also acts as a negative regulator of mTORC1 under nutrient-rich conditions by binding to the active Rag GTPases to inhibit mTORC1 localization to the lysosome and phosphorylation of downstream targets. This facilitates constitutive basal autophagy during nutrient availability. The polypeptide is WD repeat domain-containing protein 83 (Wdr83) (Rattus norvegicus (Rat)).